Here is a 191-residue protein sequence, read N- to C-terminus: Retinin (191 aa).

Positions 1–21 are cleaved as a signal peptide; sequence MSRLFLPVLAIVLVSIGASHT. Residues 52 to 88 form a disordered region; that stretch reads LADGSSGSVSSSAAQPEDQSQEEAEEQQVSSASSGSA. 2 stretches are compositionally biased toward low complexity: residues 55–69 and 78–88; these read GSSGSVSSSAAQPED and QQVSSASSGSA.

Post-translationally, phosphorylated. Specifically expressed in cornea (at protein level). Detected in retina and cortex.

It is found in the secreted. The protein is Retinin of Drosophila melanogaster (Fruit fly).